Here is a 132-residue protein sequence, read N- to C-terminus: MVMTDPIADFLTRIRNANMAKHESLEVPASKIKRDIAEILKNEGFVRDVEYIDDDKQGIIRVFLKYGKGNERVISGIRRISKPGLRSYVKADAVPKVLNGLGIAILSTSEGVITDKEARAKKIGGEVIAYIW.

The protein belongs to the universal ribosomal protein uS8 family. Part of the 30S ribosomal subunit. Contacts proteins S5 and S12.

Its function is as follows. One of the primary rRNA binding proteins, it binds directly to 16S rRNA central domain where it helps coordinate assembly of the platform of the 30S subunit. The protein is Small ribosomal subunit protein uS8 of Ligilactobacillus salivarius (strain UCC118) (Lactobacillus salivarius).